Reading from the N-terminus, the 183-residue chain is Ribosome rescue factor SmrB (183 aa).

One can recognise a Smr domain in the interval 98–173 (LDLHGLTQMQ…GDAALLVLIE (76 aa)).

The protein belongs to the SmrB family. Associates with collided ribosomes, but not with correctly translating polysomes.

Functionally, acts as a ribosome collision sensor. Detects stalled/collided disomes (pairs of ribosomes where the leading ribosome is stalled and a second ribosome has collided with it) and endonucleolytically cleaves mRNA at the 5' boundary of the stalled ribosome. Stalled/collided disomes form a new interface (primarily via the 30S subunits) that binds SmrB. Cleaved mRNA becomes available for tmRNA ligation, leading to ribosomal subunit dissociation and rescue of stalled ribosomes. This chain is Ribosome rescue factor SmrB, found in Enterobacter sp. (strain 638).